Consider the following 705-residue polypeptide: Putative membrane protein SCO6666 (705 aa).

13 consecutive transmembrane segments (helical) span residues V16 to G36, L144 to G164, N177 to L197, G201 to F221, I232 to V252, L280 to F300, L306 to L326, V360 to M380, A504 to L524, T528 to Q548, L561 to M581, V615 to F635, and S636 to V656.

Belongs to the resistance-nodulation-cell division (RND) (TC 2.A.6) family. MmpL subfamily.

The protein resides in the cell membrane. This is Putative membrane protein SCO6666 from Streptomyces coelicolor (strain ATCC BAA-471 / A3(2) / M145).